A 209-amino-acid polypeptide reads, in one-letter code: Guanylate kinase (209 aa).

Residues 9–188 (GIMLVISSPS…SVHQIKCIFT (180 aa)) enclose the Guanylate kinase-like domain. 16–23 (SPSGGGKT) provides a ligand contact to ATP.

The protein belongs to the guanylate kinase family.

The protein localises to the cytoplasm. It carries out the reaction GMP + ATP = GDP + ADP. Its function is as follows. Essential for recycling GMP and indirectly, cGMP. This chain is Guanylate kinase, found in Ehrlichia canis (strain Jake).